A 1042-amino-acid polypeptide reads, in one-letter code: Sarcoplasmic/endoplasmic reticulum calcium ATPase 2 (1042 aa).

At 1 to 48 the chain is on the cytoplasmic side; the sequence is MENAHTKTVEEVLGHFGVNESTGLSLEQVKKLKERWGSNELPAEEGKT. At S38 the chain carries Phosphoserine. The chain crosses the membrane as a helical span at residues 49–69; that stretch reads LLELVIEQFEDLLVRILLLAA. The Lumenal segment spans residues 70–89; sequence CISFVLAWFEEGEETITAFV. A helical transmembrane segment spans residues 90-110; that stretch reads EPFVILLILVANAIVGVWQER. The Cytoplasmic segment spans residues 111-253; the sequence is NAENAIEALK…QERTPLQQKL (143 aa). Residues 254–273 form a helical membrane-spanning segment; it reads DEFGEQLSKVISLICIAVWI. Topologically, residues 274–295 are lumenal; the sequence is INIGHFNDPVHGGSWIRGAIYY. Residues Y294 and Y295 each carry the 3'-nitrotyrosine modification. Residues 296–313 form a helical membrane-spanning segment; the sequence is FKIAVALAVAAIPEGLPA. The Ca(2+) site is built by V304, A305, I307, and E309. Residues 314–756 lie on the Cytoplasmic side of the membrane; sequence VITTCLALGT…EEGRAIYNNM (443 aa). D351 (4-aspartylphosphate intermediate) is an active-site residue. The Mg(2+) site is built by D351 and T353. Position 353 (T353) interacts with ATP. A Phosphothreonine modification is found at T441. ATP contacts are provided by E442, R489, and K514. At S531 the chain carries Phosphoserine. ATP is bound at residue R559. Positions 575 to 594 are interaction with HAX1; sequence MHLKDSANFIKYETNLTFVG. A Phosphoserine modification is found at S580. ATP-binding residues include T624, G625, and D626. S663 carries the phosphoserine modification. Positions 677 and 683 each coordinate ATP. D702 is a binding site for Mg(2+). N705 serves as a coordination point for ATP. A helical transmembrane segment spans residues 757 to 776; it reads KQFIRYLISSNVGEVVCIFL. 2 residues coordinate Ca(2+): N767 and E770. Over 777-786 the chain is Lumenal; that stretch reads TAALGFPEAL. The chain crosses the membrane as a helical span at residues 787–807; it reads IPVQLLWVNLVTDGLPATALG. The interval 787 to 807 is interaction with PLN; sequence IPVQLLWVNLVTDGLPATALG. Residues 788 to 1042 form an interaction with TMEM64 and PDIA3 region; the sequence is PVQLLWVNLV…DTNFSDLLWS (255 aa). Ca(2+) is bound by residues N795, T798, and D799. Over 808–827 the chain is Cytoplasmic; that stretch reads FNPPDLDIMNKPPRNPKEPL. The chain crosses the membrane as a helical span at residues 828-850; sequence ISGWLFFRYLAIGCYVGAATVGA. The Lumenal portion of the chain corresponds to 851–896; that stretch reads AAWWFIAADGGPRVSFYQLSHFLQCKEDNPDFEGVDCAIFESPYPM. A disulfide bridge connects residues C875 and C887. Residues 897–916 traverse the membrane as a helical segment; the sequence is TMALSVLVTIEMCNALNSLS. E907 contacts Ca(2+). At 917–929 the chain is on the cytoplasmic side; sequence ENQSLLRMPPWEN. Residues 930–948 traverse the membrane as a helical segment; sequence IWLVGSICLSMSLHFLILY. Residues 931 to 942 form an interaction with PLN region; it reads WLVGSICLSMSL. Over 949 to 963 the chain is Lumenal; the sequence is VEPLPLIFQITPLNV. The helical transmembrane segment at 964–984 threads the bilayer; sequence TQWLMVLKISLPVILMDETLK. The Cytoplasmic portion of the chain corresponds to 985 to 1042; the sequence is FVARNYLEPGKECVQPAPQSCSLWACTEGVSWPFVLLIVPLVMWVYSTDTNFSDLLWS.

Belongs to the cation transport ATPase (P-type) (TC 3.A.3) family. Type IIA subfamily. As to quaternary structure, interacts with sarcolipin (SLN); the interaction inhibits ATP2A2 Ca(2+) affinity. Interacts with phospholamban (PLN); the interaction inhibits ATP2A2 Ca(2+) affinity. Interacts with myoregulin (MRLN). Interacts with ARLN and ERLN; the interactions inhibit ATP2A2 Ca(2+) affinity. Interacts with SRTIT1/DWORF; the interaction results in activation of ATP2A2. Interacts with the monomeric forms of SLN, PLN, ARLN, ERLN and STRI1/DWORF. Interacts with HAX1. Interacts with S100A8 and S100A9. Interacts with SLC35G1 and STIM1. Interacts with TMEM203. Interacts with TMEM64 and PDIA3. Interacts with TMX1. Interacts with TMX2. Interacts with VMP1; VMP1 competes with PLN and SLN to prevent them from forming an inhibitory complex with ATP2A2. Interacts with ULK1. Interacts with TUNAR. Interacts with FLVCR2; this interaction occurs in the absence of heme and promotes ATP2A2 proteasomal degradation; this complex is dissociated upon heme binding. Interacts with FNIP1. In terms of assembly, interacts with TRAM2 (via C-terminus). Mg(2+) serves as cofactor. Post-translationally, nitrated under oxidative stress. Nitration on the two tyrosine residues inhibits catalytic activity. Serotonylated on Gln residues by TGM2 in response to hypoxia, leading to its inactivation. As to expression, isoform 2 is highly expressed in heart and slow twitch skeletal muscle. Isoform 1 is widely expressed.

Its subcellular location is the endoplasmic reticulum membrane. It is found in the sarcoplasmic reticulum membrane. It catalyses the reaction Ca(2+)(in) + ATP + H2O = Ca(2+)(out) + ADP + phosphate + H(+). With respect to regulation, has different conformational states with differential Ca2+ affinity. The E1 conformational state (active form) shows high Ca(2+) affinity, while the E2 state exhibits low Ca(2+) affinity. Binding of ATP allosterically increases its affinity for subsequent binding of Ca2+. Reversibly inhibited by phospholamban (PLN) at low calcium concentrations. PLN inhibits ATP2A2 Ca(2+) affinity by disrupting its allosteric activation by ATP. Inhibited by sarcolipin (SLN) and myoregulin (MRLN). The inhibition is blocked by VMP1. Enhanced by STRIT1/DWORF; STRIT1 increases activity by displacing sarcolipin (SLN), phospholamban (PLN) and myoregulin (MRLN). Stabilizes SERCA2 in its E2 state. This magnesium-dependent enzyme catalyzes the hydrolysis of ATP coupled with the translocation of calcium from the cytosol to the sarcoplasmic reticulum lumen. Involved in autophagy in response to starvation. Upon interaction with VMP1 and activation, controls ER-isolation membrane contacts for autophagosome formation. Also modulates ER contacts with lipid droplets, mitochondria and endosomes. In coordination with FLVCR2 mediates heme-stimulated switching from mitochondrial ATP synthesis to thermogenesis. In terms of biological role, involved in the regulation of the contraction/relaxation cycle. Acts as a regulator of TNFSF11-mediated Ca(2+) signaling pathways via its interaction with TMEM64 which is critical for the TNFSF11-induced CREB1 activation and mitochondrial ROS generation necessary for proper osteoclast generation. Association between TMEM64 and SERCA2 in the ER leads to cytosolic Ca(2+) spiking for activation of NFATC1 and production of mitochondrial ROS, thereby triggering Ca(2+) signaling cascades that promote osteoclast differentiation and activation. The chain is Sarcoplasmic/endoplasmic reticulum calcium ATPase 2 (ATP2A2) from Oryctolagus cuniculus (Rabbit).